The chain runs to 242 residues: Biosynthetic peptidoglycan transglycosylase (242 aa).

The helical transmembrane segment at 19–39 (ILAALAVFWGGGIALFSVVPV) threads the bilayer.

This sequence belongs to the glycosyltransferase 51 family.

The protein localises to the cell inner membrane. The enzyme catalyses [GlcNAc-(1-&gt;4)-Mur2Ac(oyl-L-Ala-gamma-D-Glu-L-Lys-D-Ala-D-Ala)](n)-di-trans,octa-cis-undecaprenyl diphosphate + beta-D-GlcNAc-(1-&gt;4)-Mur2Ac(oyl-L-Ala-gamma-D-Glu-L-Lys-D-Ala-D-Ala)-di-trans,octa-cis-undecaprenyl diphosphate = [GlcNAc-(1-&gt;4)-Mur2Ac(oyl-L-Ala-gamma-D-Glu-L-Lys-D-Ala-D-Ala)](n+1)-di-trans,octa-cis-undecaprenyl diphosphate + di-trans,octa-cis-undecaprenyl diphosphate + H(+). It functions in the pathway cell wall biogenesis; peptidoglycan biosynthesis. In terms of biological role, peptidoglycan polymerase that catalyzes glycan chain elongation from lipid-linked precursors. The chain is Biosynthetic peptidoglycan transglycosylase from Salmonella schwarzengrund (strain CVM19633).